Consider the following 420-residue polypeptide: Subtilisin (420 aa).

A signal peptide spans 1 to 31 (MKRSGKIFTTAMLAVTLMMPAMGVSANEGNA). Positions 32 to 111 (AAEGNEKFRV…DKPEALYNAM (80 aa)) are excised as a propeptide. Q115 is a Ca(2+) binding site. Residues 118–420 (PWGIKAIYNN…ASGFGFATVQ (303 aa)) enclose the Peptidase S8 domain. D145 functions as the Charge relay system in the catalytic mechanism. D154 provides a ligand contact to Ca(2+). Catalysis depends on charge relay system residues H182 and S360.

The protein belongs to the peptidase S8 family. Ca(2+) is required as a cofactor.

The protein localises to the secreted. The catalysed reaction is Hydrolysis of proteins with broad specificity for peptide bonds, and a preference for a large uncharged residue in P1. Hydrolyzes peptide amides.. Functionally, subtilisin is an extracellular alkaline serine protease, it catalyzes the hydrolysis of proteins and peptide amides. The sequence is that of Subtilisin (sub1) from Bacillus sp. (strain TA39).